We begin with the raw amino-acid sequence, 2370 residues long: Genome polyprotein (2370 aa).

The N-myristoyl glycine; by host moiety is linked to residue Gly-112. 2 disordered regions span residues 140–173 and 704–736; these read VGDM…GNVV and GADG…FDYP. Over residues 154–171 the composition is skewed to low complexity; the sequence is GSNKGGSSTSPKSTSNGN. Residues 713 to 725 show a composition bias toward polar residues; sequence APTSDLSDGNPTT. In terms of domain architecture, SF3 helicase spans 1358–1522; it reads YSTALSAISL…AAFSAAAALK (165 aa). Residue 1384 to 1391 participates in ATP binding; that stretch reads GPPGTGKS. Residue Gly-1597 is the site of N-myristoyl glycine; by host attachment. A helical membrane pass occupies residues 1646-1666; the sequence is IFAASSFLSLIAATLTIVRCL. The disordered stretch occupies residues 1674 to 1696; it reads GAYSGTPVPKPRKKDLPKQPVYS. Tyr-1676 carries the post-translational modification O-(5'-phospho-RNA)-tyrosine. Residues 1697–1886 enclose the Peptidase C3 domain; that stretch reads GPVRRQGFDP…FSARLTPERV (190 aa). Active-site for protease 3C activity residues include His-1745, Glu-1776, and Cys-1849. A compositionally biased stretch (polar residues) spans 2007 to 2016; it reads SPGYPWTTQG. Residues 2007 to 2026 form a disordered region; it reads SPGYPWTTQGRSRRSLFDED. A RdRp catalytic domain is found at 2122 to 2239; it reads SNVWSIDYSC…GSNQDFHPRE (118 aa). Catalysis depends on for RdRp activity residues Asp-2128 and Asp-2225.

As to quaternary structure, interacts with capsid protein VP1. Interacts with capsid protein VP3. Interacts with capsid protein VP0. Interacts with capsid protein VP3. In terms of assembly, interacts with capsid protein VP0. Interacts with capsid protein VP1. As to quaternary structure, homodimer. Interacts with protein 2B. Interacts with protein 2C. Homodimer. Interacts with host ABCD3. Interacts with protein 2A. Interacts with host ACBD3. In terms of assembly, homodimer. Interacts with host ABCD3. Interacts with protein 2A. Interacts with protein 3A. Interacts with protein 3C. Interacts with host ACBD3. As to quaternary structure, homodimer. Interacts with host ABCD3 (via GOLD domain) and PI4KB; these interactions allow the formation of a viral protein/ACBD3/PI4KB complex in order to synthesize PI4P at the viral RNA replication sites. Interacts with protein 2C. Interacts with protein 3C. Protein 3C: Interacts with protein 2A. Protein 3C: Interacts with protein 2C. Specific enzymatic cleavages by the viral protease in vivo yield a variety of precursors and mature proteins. The leader protein-VP0 junction is cleaved by 3C proteinase. The VP1/2A junction is cleaved by the protein 3CD in association with protein 2A. Post-translationally, uridylylated by the polymerase and is covalently linked to the 5'-end of genomic RNA. This uridylylated form acts as a nucleotide-peptide primer for the polymerase.

It localises to the virion. Its subcellular location is the host cytoplasm. The protein resides in the host cytoplasmic vesicle membrane. It is found in the host Golgi apparatus membrane. The catalysed reaction is RNA(n) + a ribonucleoside 5'-triphosphate = RNA(n+1) + diphosphate. It catalyses the reaction Selective cleavage of Gln-|-Gly bond in the poliovirus polyprotein. In other picornavirus reactions Glu may be substituted for Gln, and Ser or Thr for Gly.. It carries out the reaction ATP + H2O = ADP + phosphate + H(+). Functionally, required for viral RNA replication and viral RNA encapsidation. Does not have any proteolytic activity. Its function is as follows. Forms an icosahedral capsid of pseudo T=3 symmetry with capsid proteins VP0 and VP3. Together they form an icosahedral capsid composed of 60 copies of each VP0, VP1, and VP3. All the three latter proteins contain a beta-sheet structure called beta-barrel jelly roll. Forms an icosahedral capsid of pseudo T=3 symmetry with capsid proteins VP1 and VP3. Together they form an icosahedral capsid composed of 60 copies of each VP0, VP1, and VP3. All the three latter proteins contain a beta-sheet structure called beta-barrel jelly roll. In terms of biological role, forms an icosahedral capsid of pseudo T=3 symmetry with capsid proteins VP0 and VP1. Together they form an icosahedral capsid composed of 60 copies of each VP0, VP1, and VP3. All the three latter proteins contain a beta-sheet structure called beta-barrel jelly roll. Functionally, required for viral RNA replication. Does not have any proteolytic activity. Its function is as follows. Affects membrane integrity and causes an increase in membrane permeability. Induces and associates with structural rearrangements of intracellular membranes. Displays RNA-binding, nucleotide binding and NTPase activities. May play a role in virion morphogenesis and viral RNA encapsidation by interacting with the capsid protein VP3. In terms of biological role, serves as membrane anchor via its hydrophobic domain. Plays an essential role in viral RNA replication by recruiting PI4KB at the viral replication sites, thereby allowing the formation of rearranged membranous structures where viral replication takes place. Functionally, forms a primer, VPg-pU, which is utilized by the polymerase for the initiation of RNA chains. Its function is as follows. Cysteine protease that generates mature viral proteins from the precursor polyprotein. In addition to its proteolytic activity, it binds to viral RNA, and thus influences viral genome replication. RNA and substrate cooperatively bind to the protease. Replicates the genomic and antigenomic RNAs by recognizing replications specific signals. Performs VPg uridylylation. This Homo sapiens (Human) protein is Genome polyprotein.